The chain runs to 251 residues: Dihydroorotate dehydrogenase B (NAD(+)), electron transfer subunit homolog (251 aa).

An FAD-binding FR-type domain is found at 2-101; that stretch reads LAELNAEVLE…FLPLGKRLFS (100 aa). Positions 217, 222, 225, and 238 each coordinate [2Fe-2S] cluster.

Belongs to the PyrK family. Requires [2Fe-2S] cluster as cofactor. It depends on FAD as a cofactor.

The sequence is that of Dihydroorotate dehydrogenase B (NAD(+)), electron transfer subunit homolog from Aquifex aeolicus (strain VF5).